A 295-amino-acid polypeptide reads, in one-letter code: Indole-3-glycerol phosphate synthase (295 aa).

It belongs to the TrpC family.

It catalyses the reaction 1-(2-carboxyphenylamino)-1-deoxy-D-ribulose 5-phosphate + H(+) = (1S,2R)-1-C-(indol-3-yl)glycerol 3-phosphate + CO2 + H2O. It participates in amino-acid biosynthesis; L-tryptophan biosynthesis; L-tryptophan from chorismate: step 4/5. The protein is Indole-3-glycerol phosphate synthase of Prochlorococcus marinus subsp. pastoris (strain CCMP1986 / NIES-2087 / MED4).